We begin with the raw amino-acid sequence, 252 residues long: Imidazole glycerol phosphate synthase subunit HisF (252 aa).

Catalysis depends on residues Asp11 and Asp130.

This sequence belongs to the HisA/HisF family. In terms of assembly, heterodimer of HisH and HisF.

It localises to the cytoplasm. The catalysed reaction is 5-[(5-phospho-1-deoxy-D-ribulos-1-ylimino)methylamino]-1-(5-phospho-beta-D-ribosyl)imidazole-4-carboxamide + L-glutamine = D-erythro-1-(imidazol-4-yl)glycerol 3-phosphate + 5-amino-1-(5-phospho-beta-D-ribosyl)imidazole-4-carboxamide + L-glutamate + H(+). The protein operates within amino-acid biosynthesis; L-histidine biosynthesis; L-histidine from 5-phospho-alpha-D-ribose 1-diphosphate: step 5/9. In terms of biological role, IGPS catalyzes the conversion of PRFAR and glutamine to IGP, AICAR and glutamate. The HisF subunit catalyzes the cyclization activity that produces IGP and AICAR from PRFAR using the ammonia provided by the HisH subunit. The polypeptide is Imidazole glycerol phosphate synthase subunit HisF (Rhodospirillum rubrum (strain ATCC 11170 / ATH 1.1.1 / DSM 467 / LMG 4362 / NCIMB 8255 / S1)).